The chain runs to 190 residues: HTH-type transcriptional repressor CutR (190 aa).

The region spanning P3–L58 is the HTH deoR-type domain. A DNA-binding region (H-T-H motif) is located at residues L20–D39.

The protein resides in the cytoplasm. May act as a negative transcriptional regulator of cutJ/ycnJ in the presence of copper. May use copper as a corepressor. In Bacillus subtilis (strain 168), this protein is HTH-type transcriptional repressor CutR.